We begin with the raw amino-acid sequence, 598 residues long: uncharacterized protein (598 aa).

A compositionally biased stretch (basic and acidic residues) spans 1–23 (MSHEGSRQARDRGVTRSKAEKAR). Disordered regions lie at residues 1–32 (MSHEGSRQARDRGVTRSKAEKARPPTQPVPQV), 151–190 (FHNEEPGNPDQFLLGSSWDKESQKPTQPSEPSAEPKVTPR), and 222–241 (PSKESLRSTAEGERVYSPQS). The span at 225 to 235 (ESLRSTAEGER) shows a compositional bias: basic and acidic residues. 2 positions are modified to phosphoserine: S238 and S242. 2 disordered regions span residues 366-396 (RRSQAGTATSACESQALSSRAPSKPHVSSPR) and 551-571 (AEEGTPQAPEQQPIQTGVSKP). Polar residues-rich tracts occupy residues 369-386 (QAGTATSACESQALSSRA) and 558-569 (APEQQPIQTGVS).

This is an uncharacterized protein from Mus musculus (Mouse).